The primary structure comprises 176 residues: MDLPGPIHDFLLVFLGSGLILGALGVVLFTNPIFSAFSLGLVLVCISLFYILANSHFVASAQLLIYVGAINVLIIFSVMFMSGPEYDKKFQLWTVGDGVTSLVCISLFVSLISTILNTSWYGIIWTTKSNQILEQDLINASQQIGIHLSTDFFLPFELISIILLVSLIGAIAVARQ.

Helical transmembrane passes span 10 to 30 (FLLV…VLFT), 33 to 53 (IFSA…YILA), 63 to 83 (LLIY…FMSG), 105 to 125 (ISLF…GIIW), and 152 to 172 (FFLP…GAIA).

It belongs to the complex I subunit 6 family. In terms of assembly, NDH is composed of at least 16 different subunits, 5 of which are encoded in the nucleus.

The protein resides in the plastid. It localises to the chloroplast thylakoid membrane. It carries out the reaction a plastoquinone + NADH + (n+1) H(+)(in) = a plastoquinol + NAD(+) + n H(+)(out). It catalyses the reaction a plastoquinone + NADPH + (n+1) H(+)(in) = a plastoquinol + NADP(+) + n H(+)(out). In terms of biological role, NDH shuttles electrons from NAD(P)H:plastoquinone, via FMN and iron-sulfur (Fe-S) centers, to quinones in the photosynthetic chain and possibly in a chloroplast respiratory chain. The immediate electron acceptor for the enzyme in this species is believed to be plastoquinone. Couples the redox reaction to proton translocation, and thus conserves the redox energy in a proton gradient. The sequence is that of NAD(P)H-quinone oxidoreductase subunit 6, chloroplastic (ndhG) from Spinacia oleracea (Spinach).